The chain runs to 417 residues: Probable secreted aspartic protease ARB_07536 (417 aa).

The first 20 residues, 1–20 (MRGILILVALGAATIPQASA), serve as a signal peptide directing secretion. The 372-residue stretch at 42–413 (NTDLVTIGTP…DFEKNRVGLA (372 aa)) folds into the Peptidase A1 domain. N-linked (GlcNAc...) asparagine glycosylation is found at N74, N91, N100, N170, N276, and N314. A disulfide bond links C333 and C373.

This sequence belongs to the peptidase A1 family.

It is found in the secreted. Probable secreted aspartic protease that supplies the fungus with nutrient amino acids. May be able to degrade the selected host's proteins involved in the immune defense. This Arthroderma benhamiae (strain ATCC MYA-4681 / CBS 112371) (Trichophyton mentagrophytes) protein is Probable secreted aspartic protease ARB_07536.